A 478-amino-acid polypeptide reads, in one-letter code: Stromelysin-1 (478 aa).

An N-terminal signal peptide occupies residues 1–17 (MKTLPTLLLLCVALCSA). The propeptide at 18–100 (YPLDGASRDA…PRCGVPDVGH (83 aa)) is activation peptide. A Cysteine switch motif is present at residues 91 to 98 (PRCGVPDV). A Zn(2+)-binding site is contributed by C93. 2 residues coordinate Ca(2+): D125 and D159. Positions 169 and 171 each coordinate Zn(2+). Ca(2+)-binding residues include D176, G177, G179, and V181. A Zn(2+)-binding site is contributed by H184. Residues G191, N193, and D195 each contribute to the Ca(2+) site. H197 is a Zn(2+) binding site. Ca(2+) contacts are provided by D199, D200, and E202. H219 is a binding site for Zn(2+). The active site involves E220. Zn(2+) is bound by residues H223 and H229. 4 Hemopexin repeats span residues 288–337 (PVMC…WPSL), 338–384 (PSAV…GFPS), 386–434 (IRKI…FPGI), and 435–478 (NPKI…WFQC). C291 and C478 are disulfide-bonded. D298 is a Ca(2+) binding site. Residues D390 and D439 each contribute to the Ca(2+) site.

It belongs to the peptidase M10A family. Ca(2+) serves as cofactor. The cofactor is Zn(2+).

It localises to the secreted. It is found in the extracellular space. The protein resides in the extracellular matrix. It catalyses the reaction Preferential cleavage where P1', P2' and P3' are hydrophobic residues.. Functionally, metalloproteinase with a rather broad substrate specificity that can degrade fibronectin, laminin, gelatins of type I, III, IV, and V; collagens III, IV, X, and IX, and cartilage proteoglycans. Activates different molecules including growth factors, plasminogen or other matrix metalloproteinases such as MMP9. Once released into the extracellular matrix (ECM), the inactive pro-enzyme is activated by the plasmin cascade signaling pathway. Also acts intracellularly. For example, in dopaminergic neurons, gets activated by the serine protease HTRA2 upon stress and plays a pivotal role in DA neuronal degeneration by mediating microglial activation and alpha-synuclein/SNCA cleavage. In addition, plays a role in immune response and possesses antiviral activity against various viruses. Mechanistically, translocates from the cytoplasm into the cell nucleus upon virus infection to influence NF-kappa-B activities. This Oryctolagus cuniculus (Rabbit) protein is Stromelysin-1 (MMP3).